The primary structure comprises 661 residues: MISSELTNDQIIDLISDYKNFKRIIEASVPEDDRRRNQNRQNRNKDLTKLSNVQFWQLTTDVNDELMKRLTDSGADASLNDLDLKRGKAQSKLSRLKDAKFHKLILDIFTEIERRNLHHLDMGTHNNGLDEGDLNFYLNDTLFESFKINDDFMSVNGIISIEVFRELKTQFTLYFQNTLHRIDPVDTTTTRLPILLETIIKIAKLIGDLLPVLSSVSLQSSLENEIVYLKSALSHAITSTRYFLTYGDLIPRIVAQSSISEVIFAFCNIAQIVKIKSTSRDDISRNEGELSDIEAGMKPLKIIEKVKNEKNGKDISSLGDSGSTAVSFPSSGKPITKKSDMPVVVASPSISIIEKSESSIRESGKVRNNTSGETNLASVSPLKNTKNSSRITSEPSPREGLPLKVVSNSRSPSPQGNTLPLIGKFRQDYQASPPKKVITKPVAETAKPYANIPPAADVLYSPTVTKMRKFREKVQKFAPNSGLGLRISTSEENLNNSDVNSTTHNANINNLVEFVESKSMVVLPMAQGILNDVQASKSKLFKSARSVSRLCQNSIEIIPILESVIDMTTKAMVQKSFKLDLGEHCKEIIERLTDCSQKLSELCTYGCDSTKLGKKRFYQKLADILMEVTKRTRELVECVKMANRQTLSQDLSSFFNYRSVQ.

Disordered regions lie at residues 313–340 and 356–418; these read KDIS…KKSD and SESS…QGNT. The segment covering 318 to 330 has biased composition (polar residues); it reads LGDSGSTAVSFPS. Positions 356–365 are enriched in basic and acidic residues; that stretch reads SESSIRESGK. Composition is skewed to polar residues over residues 366–395 and 406–418; these read VRNN…TSEP and VSNS…QGNT.

In terms of assembly, conjugated with HUB1. HUB1 has not the classical C-terminal Gly residue, so it is still unknown how conjugation may occur.

It is found in the bud tip. The protein localises to the bud neck. Its subcellular location is the cytoplasm. The protein resides in the cytoskeleton. Its function is as follows. Polarity-determining protein which forms a conjugate with the ubiquitin-like modifier HUB1. Involved in bud site selection and cellular morphogenesis during conjugation. Required for pseudohyphal growth. The polypeptide is Protein SPH1 (SPH1) (Saccharomyces cerevisiae (strain ATCC 204508 / S288c) (Baker's yeast)).